The primary structure comprises 1469 residues: Regulation of nuclear pre-mRNA domain-containing protein 2 (1469 aa).

N-acetylalanine is present on A2. S16 carries the post-translational modification Phosphoserine. The region spanning 19–149 (SAGALESSLD…ALREALMDRA (131 aa)) is the CID domain. Disordered regions lie at residues 329–445 (STLP…TAAP) and 489–524 (TGVSSASRPSPGIPTSPSNLSSGLKTPAPATTPSHN). Basic and acidic residues predominate over residues 370–386 (ESDKSATPEPVTDNRDV). S374 is modified (phosphoserine). At T376 the chain carries Phosphothreonine. The segment covering 387–396 (EDMELSDVED) has biased composition (acidic residues). Phosphoserine is present on S392. Positions 397–412 (DGSKIIVEDRKEKPVE) are enriched in basic and acidic residues. Residues 419–430 (GVPTKSTESVSK) are compositionally biased toward polar residues. The segment covering 434–445 (CAPPSVPTTAAP) has biased composition (pro residues). 4 positions are modified to phosphoserine: S492, S495, S498, and S504. T536 is modified (phosphothreonine). Residues 572-594 (ASEVTSQSTTASPASTTGSAVKG) form a disordered region. Positions 576–591 (TSQSTTASPASTTGSA) are enriched in low complexity. A phosphoserine mark is found at S583 and S612. Phosphothreonine is present on T617. A Phosphoserine modification is found at S633. The segment covering 647-656 (SLGFTGTHNP) has biased composition (polar residues). Disordered regions lie at residues 647–686 (SLGFTGTHNPSPAAPPTEVAVCQSSEVSKPKPESESTSPS), 716–867 (SSAP…AMMN), 919–1013 (SENC…SGVE), 1033–1140 (KNAS…HGRE), 1154–1183 (SSFDNGPSSASELASLGGGGSGGLTGFKTT), 1204–1328 (FNST…PTPP), and 1368–1414 (GPGL…HRDA). Phosphoserine is present on residues S682, S684, S735, and S738. A Phosphothreonine modification is found at T742. A Phosphoserine modification is found at S749. T751 carries the post-translational modification Phosphothreonine. Residues 761–771 (PTSSSVDTMSL) show a composition bias toward polar residues. S777 and S781 each carry phosphoserine. The segment covering 777–787 (SPGSSTPSSTR) has biased composition (low complexity). Residue T782 is modified to Phosphothreonine. Residues S788, S836, S845, S919, and S947 each carry the phosphoserine modification. Over residues 959 to 982 (PDSNHSGLSQSTAGHLTLPQTQYP) the composition is skewed to polar residues. Phosphoserine is present on residues S984 and S995. A compositionally biased stretch (polar residues) spans 1047-1073 (QTPNKGTSSDGVSLSNLTQPSLPTTDQ). Phosphoserine is present on residues S1086 and S1117. Residues 1159–1168 (GPSSASELAS) show a composition bias toward low complexity. Over residues 1169–1178 (LGGGGSGGLT) the composition is skewed to gly residues. A compositionally biased stretch (pro residues) spans 1272–1295 (GPPPPPGEHSGVPFPPPPPPPPPG). R1375 is subject to Asymmetric dimethylarginine. Composition is skewed to low complexity over residues 1377-1390 (SLSLPSHPLEHLGP) and 1400-1409 (TSSSGLPLSP). Residues R1432 and R1438 each carry the asymmetric dimethylarginine modification.

As to quaternary structure, associates with the RNA polymerase II complex.

This Mus musculus (Mouse) protein is Regulation of nuclear pre-mRNA domain-containing protein 2 (Rprd2).